The primary structure comprises 157 residues: MSTVVETVTALAQPIVAQHQFELVDVEFVKEGKSWYLRLYIDKPGGINIEECALVSDEVSEKMDALDPDPIPQAYFLEVSSPGAERPLKKPADFEKAVGDYIHVSLYQKIGNSKVYEGTLLSLTADSLDLEVNLKGRIKTLTIPRDAVAQARLAIKF.

Belongs to the RimP family.

The protein localises to the cytoplasm. In terms of biological role, required for maturation of 30S ribosomal subunits. The protein is Ribosome maturation factor RimP of Levilactobacillus brevis (strain ATCC 367 / BCRC 12310 / CIP 105137 / JCM 1170 / LMG 11437 / NCIMB 947 / NCTC 947) (Lactobacillus brevis).